The sequence spans 230 residues: Demethylluteothin O-methyltransferase (230 aa).

The protein belongs to the methyltransferase superfamily.

It carries out the reaction demethylluteothin + S-adenosyl-L-methionine = luteothin + S-adenosyl-L-homocysteine. The protein operates within antibiotic biosynthesis. It functions in the pathway polyketide biosynthesis. Functionally, methyltransferase involved in the biosynthesis of the antibiotic aureothin, a nitroaryl polyketide metabolite with antifungal, cytotoxic and insecticidal activities. Catalyzes the methylation of demethylluteothin to luteothin (also called deoxyaureothin). Is specific for its gamma-pyrone substrate, and does not act on the alpha-pyrone isomer. This is Demethylluteothin O-methyltransferase from Streptomyces thioluteus.